Consider the following 234-residue polypeptide: Purine nucleoside phosphorylase DeoD-type (234 aa).

H5 contributes to the a purine D-ribonucleoside binding site. Phosphate-binding positions include G21, R25, R44, and 88–91 (RVGT). Residues 178-180 (EME) and 202-203 (SD) each bind a purine D-ribonucleoside. D203 serves as the catalytic Proton donor.

Belongs to the PNP/UDP phosphorylase family. In terms of assembly, homohexamer; trimer of homodimers.

It catalyses the reaction a purine D-ribonucleoside + phosphate = a purine nucleobase + alpha-D-ribose 1-phosphate. The catalysed reaction is a purine 2'-deoxy-D-ribonucleoside + phosphate = a purine nucleobase + 2-deoxy-alpha-D-ribose 1-phosphate. Functionally, catalyzes the reversible phosphorolytic breakdown of the N-glycosidic bond in the beta-(deoxy)ribonucleoside molecules, with the formation of the corresponding free purine bases and pentose-1-phosphate. The polypeptide is Purine nucleoside phosphorylase DeoD-type (Lactococcus lactis subsp. lactis (strain IL1403) (Streptococcus lactis)).